Here is a 541-residue protein sequence, read N- to C-terminus: Serine/threonine-protein kinase akt-1 (541 aa).

A PH domain is found at 15-118 (DVVIEGWLHK…WIHAIESISK (104 aa)). Positions 193–450 (FDFLKVLGKG…ALEICRADFF (258 aa)) constitute a Protein kinase domain. Residues 199–207 (LGKGTFGKV) and lysine 222 each bind ATP. Aspartate 316 acts as the Proton acceptor in catalysis. Phosphothreonine is present on threonine 350. The AGC-kinase C-terminal domain occupies 451-528 (RTVDWEATYR…HNVMGSINRI (78 aa)). Position 517 is a phosphoserine (serine 517).

This sequence belongs to the protein kinase superfamily. AGC Ser/Thr protein kinase family. RAC subfamily. As to quaternary structure, interacts with pdk-1, sgk-1, akt-2 and daf-16. Part of a complex containing sgk-1, akt-1 and akt-2. Interacts with cmd-1 in the presence of Ca(2+). Interacts with let-92 phosphatase regulatory subunit pptr-1. Requires Mg(2+) as cofactor. Expressed in neurons, muscle cells of the pharynx, rectal gland cells, vulva and spermatheca.

The enzyme catalyses L-seryl-[protein] + ATP = O-phospho-L-seryl-[protein] + ADP + H(+). It catalyses the reaction L-threonyl-[protein] + ATP = O-phospho-L-threonyl-[protein] + ADP + H(+). With respect to regulation, phosphorylated and activated by pdk-1. In terms of biological role, acts downstream of PI3 kinase age-1 and kinase pdk-1 in the daf-2/insulin receptor-like transduction pathway. Phosphorylates Forkhead-related daf-16 and the longevity-promoting skn-1 transcription factors, which inhibits their entry into the nucleus and antagonizes their functions. Plays a role in maintaining the gonadal basement membrane through it's role in inhibiting daf-16 activity. Has an essential role in regulating developmental arrest at the dauer stage. Plays a role in immune function and pathogen resistance. Regulates salt chemotaxis learning. Downstream of age-1 and together with akt-2 and sgk-1, promotes cell survival during embryonic development. This is Serine/threonine-protein kinase akt-1 from Caenorhabditis elegans.